Reading from the N-terminus, the 1221-residue chain is Phosphoenolpyruvate carboxylase 2 (1221 aa).

Histidine 156 is a catalytic residue. 2 disordered regions span residues 443–588 and 642–661; these read TAAE…DPTF and REPAGEAHGGVGAGGGGGGG. Composition is skewed to low complexity over residues 503–513 and 550–564; these read TTTATAAAAAA and PFREAANAAMSTAAS. Gly residues-rich tracts occupy residues 565–575 and 648–661; these read GGAGGGGGGGA and AHGGVGAGGGGGGG. Lysine 886 is a catalytic residue.

Belongs to the PEPCase type 1 family. Requires Mg(2+) as cofactor.

The protein resides in the cytoplasm. It catalyses the reaction oxaloacetate + phosphate = phosphoenolpyruvate + hydrogencarbonate. Its function is as follows. Through the carboxylation of phosphoenolpyruvate (PEP) it forms oxaloacetate, a four-carbon dicarboxylic acid source for the tricarboxylic acid cycle. This Chlamydomonas reinhardtii (Chlamydomonas smithii) protein is Phosphoenolpyruvate carboxylase 2.